We begin with the raw amino-acid sequence, 383 residues long: N-acetyldiaminopimelate deacetylase (383 aa).

Residue Asp-72 is part of the active site. The Proton acceptor role is filled by Glu-131.

The protein belongs to the peptidase M20A family. N-acetyldiaminopimelate deacetylase subfamily.

The enzyme catalyses N-acetyl-(2S,6S)-2,6-diaminopimelate + H2O = (2S,6S)-2,6-diaminopimelate + acetate. The protein operates within amino-acid biosynthesis; L-lysine biosynthesis via DAP pathway; LL-2,6-diaminopimelate from (S)-tetrahydrodipicolinate (acetylase route): step 3/3. In terms of biological role, catalyzes the conversion of N-acetyl-diaminopimelate to diaminopimelate and acetate. The polypeptide is N-acetyldiaminopimelate deacetylase (Lacticaseibacillus casei (strain BL23) (Lactobacillus casei)).